The chain runs to 456 residues: Bifunctional protein GlmU (456 aa).

The tract at residues 1 to 229 is pyrophosphorylase; sequence MLNSAMSVVI…ISETDGVNNR (229 aa). Residues 11-14, Lys25, Gln76, 81-82, 103-105, Gly140, Glu154, Asn169, and Asn227 contribute to the UDP-N-acetyl-alpha-D-glucosamine site; these read LAAG, GT, and YGD. Asp105 contacts Mg(2+). Asn227 contributes to the Mg(2+) binding site. The tract at residues 230 to 250 is linker; it reads LQLSRLERIYQAEQAEKLLLS. Residues 251-456 form an N-acetyltransferase region; that stretch reads GVMLRDPARF…QGWQRPVKKK (206 aa). UDP-N-acetyl-alpha-D-glucosamine-binding residues include Arg333 and Lys351. His363 functions as the Proton acceptor in the catalytic mechanism. Residues Tyr366 and Asn377 each coordinate UDP-N-acetyl-alpha-D-glucosamine. Acetyl-CoA-binding positions include Ala380, 386 to 387, Ser405, Ala423, and Arg440; that span reads NY.

It in the N-terminal section; belongs to the N-acetylglucosamine-1-phosphate uridyltransferase family. This sequence in the C-terminal section; belongs to the transferase hexapeptide repeat family. As to quaternary structure, homotrimer. Mg(2+) serves as cofactor.

It localises to the cytoplasm. It catalyses the reaction alpha-D-glucosamine 1-phosphate + acetyl-CoA = N-acetyl-alpha-D-glucosamine 1-phosphate + CoA + H(+). The enzyme catalyses N-acetyl-alpha-D-glucosamine 1-phosphate + UTP + H(+) = UDP-N-acetyl-alpha-D-glucosamine + diphosphate. It participates in nucleotide-sugar biosynthesis; UDP-N-acetyl-alpha-D-glucosamine biosynthesis; N-acetyl-alpha-D-glucosamine 1-phosphate from alpha-D-glucosamine 6-phosphate (route II): step 2/2. It functions in the pathway nucleotide-sugar biosynthesis; UDP-N-acetyl-alpha-D-glucosamine biosynthesis; UDP-N-acetyl-alpha-D-glucosamine from N-acetyl-alpha-D-glucosamine 1-phosphate: step 1/1. The protein operates within bacterial outer membrane biogenesis; LPS lipid A biosynthesis. Its function is as follows. Catalyzes the last two sequential reactions in the de novo biosynthetic pathway for UDP-N-acetylglucosamine (UDP-GlcNAc). The C-terminal domain catalyzes the transfer of acetyl group from acetyl coenzyme A to glucosamine-1-phosphate (GlcN-1-P) to produce N-acetylglucosamine-1-phosphate (GlcNAc-1-P), which is converted into UDP-GlcNAc by the transfer of uridine 5-monophosphate (from uridine 5-triphosphate), a reaction catalyzed by the N-terminal domain. This Salmonella choleraesuis (strain SC-B67) protein is Bifunctional protein GlmU.